The primary structure comprises 235 residues: Glycerol-3-phosphate acyltransferase (235 aa).

Transmembrane regions (helical) follow at residues 4-24, 56-76, 94-114, 124-144, 152-172, and 191-211; these read LLAI…IMAG, TVTL…VAFF, LLAG…GFKG, MLIG…LLTI, VASM…KYIF, and FHDS…LGIL.

It belongs to the PlsY family. Probably interacts with PlsX.

The protein resides in the cell inner membrane. The catalysed reaction is an acyl phosphate + sn-glycerol 3-phosphate = a 1-acyl-sn-glycero-3-phosphate + phosphate. The protein operates within lipid metabolism; phospholipid metabolism. Catalyzes the transfer of an acyl group from acyl-phosphate (acyl-PO(4)) to glycerol-3-phosphate (G3P) to form lysophosphatidic acid (LPA). This enzyme utilizes acyl-phosphate as fatty acyl donor, but not acyl-CoA or acyl-ACP. The polypeptide is Glycerol-3-phosphate acyltransferase (Chlorobium limicola (strain DSM 245 / NBRC 103803 / 6330)).